A 327-amino-acid polypeptide reads, in one-letter code: Probable cell division protein WhiA (327 aa).

Residues 275 to 308 (SLEELGRLADPQMTKDAVAGRIRRLLTTADKRAR) constitute a DNA-binding region (H-T-H motif).

This sequence belongs to the WhiA family.

Involved in cell division and chromosome segregation. The polypeptide is Probable cell division protein WhiA (Corynebacterium efficiens (strain DSM 44549 / YS-314 / AJ 12310 / JCM 11189 / NBRC 100395)).